Here is a 66-residue protein sequence, read N- to C-terminus: MANPKRKWSKARTGKRRSQWKLTVPNLVECPHCHSLKLLHRVCKECGHYTVRHKGERKSIEVLSVE.

This sequence belongs to the bacterial ribosomal protein bL32 family.

The protein is Large ribosomal subunit protein bL32 of Acetivibrio thermocellus (strain ATCC 27405 / DSM 1237 / JCM 9322 / NBRC 103400 / NCIMB 10682 / NRRL B-4536 / VPI 7372) (Clostridium thermocellum).